A 92-amino-acid chain; its full sequence is Small ribosomal subunit protein bS20 (92 aa).

Belongs to the bacterial ribosomal protein bS20 family.

Functionally, binds directly to 16S ribosomal RNA. The chain is Small ribosomal subunit protein bS20 from Persephonella marina (strain DSM 14350 / EX-H1).